Here is a 200-residue protein sequence, read N- to C-terminus: Small ribosomal subunit protein uS4c (200 aa).

The 64-residue stretch at 91–154 (MRLDNVVFRL…NSRKMVTEAN (64 aa)) folds into the S4 RNA-binding domain.

It belongs to the universal ribosomal protein uS4 family. In terms of assembly, part of the 30S ribosomal subunit. Contacts protein S5. The interaction surface between S4 and S5 is involved in control of translational fidelity.

The protein resides in the plastid. The protein localises to the chloroplast. One of the primary rRNA binding proteins, it binds directly to 16S rRNA where it nucleates assembly of the body of the 30S subunit. Functionally, with S5 and S12 plays an important role in translational accuracy. The polypeptide is Small ribosomal subunit protein uS4c (rps4) (Oltmannsiellopsis viridis (Marine flagellate)).